The chain runs to 460 residues: Bifunctional protein GlmU (460 aa).

The segment at 1–229 (MSKLNIVVLA…VWETTGVNSK (229 aa)) is pyrophosphorylase. UDP-N-acetyl-alpha-D-glucosamine contacts are provided by residues 9–12 (LAAG), lysine 23, glutamine 74, 79–80 (GT), 101–103 (YGD), glycine 138, glutamate 154, asparagine 169, and asparagine 227. Position 103 (aspartate 103) interacts with Mg(2+). Asparagine 227 contacts Mg(2+). The tract at residues 230 to 250 (VQLAGLERIYQTAQANKLLEQ) is linker. An N-acetyltransferase region spans residues 251 to 460 (GVALADPARI…RPVKKPKPKN (210 aa)). Positions 333 and 351 each coordinate UDP-N-acetyl-alpha-D-glucosamine. Residue histidine 363 is the Proton acceptor of the active site. Tyrosine 366 and asparagine 377 together coordinate UDP-N-acetyl-alpha-D-glucosamine. Residues alanine 380, 386–387 (NY), serine 405, alanine 423, and arginine 440 each bind acetyl-CoA.

In the N-terminal section; belongs to the N-acetylglucosamine-1-phosphate uridyltransferase family. The protein in the C-terminal section; belongs to the transferase hexapeptide repeat family. In terms of assembly, homotrimer. Mg(2+) is required as a cofactor.

It localises to the cytoplasm. The catalysed reaction is alpha-D-glucosamine 1-phosphate + acetyl-CoA = N-acetyl-alpha-D-glucosamine 1-phosphate + CoA + H(+). It carries out the reaction N-acetyl-alpha-D-glucosamine 1-phosphate + UTP + H(+) = UDP-N-acetyl-alpha-D-glucosamine + diphosphate. The protein operates within nucleotide-sugar biosynthesis; UDP-N-acetyl-alpha-D-glucosamine biosynthesis; N-acetyl-alpha-D-glucosamine 1-phosphate from alpha-D-glucosamine 6-phosphate (route II): step 2/2. It participates in nucleotide-sugar biosynthesis; UDP-N-acetyl-alpha-D-glucosamine biosynthesis; UDP-N-acetyl-alpha-D-glucosamine from N-acetyl-alpha-D-glucosamine 1-phosphate: step 1/1. It functions in the pathway bacterial outer membrane biogenesis; LPS lipid A biosynthesis. In terms of biological role, catalyzes the last two sequential reactions in the de novo biosynthetic pathway for UDP-N-acetylglucosamine (UDP-GlcNAc). The C-terminal domain catalyzes the transfer of acetyl group from acetyl coenzyme A to glucosamine-1-phosphate (GlcN-1-P) to produce N-acetylglucosamine-1-phosphate (GlcNAc-1-P), which is converted into UDP-GlcNAc by the transfer of uridine 5-monophosphate (from uridine 5-triphosphate), a reaction catalyzed by the N-terminal domain. This chain is Bifunctional protein GlmU, found in Nitrosospira multiformis (strain ATCC 25196 / NCIMB 11849 / C 71).